The primary structure comprises 606 residues: NADH-ubiquinone oxidoreductase chain 5 (606 aa).

Transmembrane regions (helical) follow at residues 1–21, 35–55, 87–107, 114–134, 140–160, 171–191, 211–233, 241–261, 272–292, 301–320, 325–347, 366–386, 413–433, 457–477, 482–502, and 582–602; these read MNLF…PIMV, YVKN…MMYL, LMFM…SMWY, INQF…LVTA, LFIG…WWFG, AILY…WFLS, FPLM…HPWL, TPVS…FLLV, LIQT…AICA, IIAF…IGLN, AFLH…GSII, LPFT…MPFL, LTAT…ALLG, LLIG…PVIT, MPLH…IIAF, and GLIK…MILF.

Belongs to the complex I subunit 5 family. Core subunit of respiratory chain NADH dehydrogenase (Complex I) which is composed of 45 different subunits.

It is found in the mitochondrion inner membrane. The enzyme catalyses a ubiquinone + NADH + 5 H(+)(in) = a ubiquinol + NAD(+) + 4 H(+)(out). Core subunit of the mitochondrial membrane respiratory chain NADH dehydrogenase (Complex I) which catalyzes electron transfer from NADH through the respiratory chain, using ubiquinone as an electron acceptor. Essential for the catalytic activity and assembly of complex I. The sequence is that of NADH-ubiquinone oxidoreductase chain 5 (MT-ND5) from Balaenoptera musculus (Blue whale).